A 625-amino-acid polypeptide reads, in one-letter code: Very-long-chain aldehyde decarbonylase CER1 (625 aa).

The next 5 membrane-spanning stretches (helical) occupy residues 45–65 (LGYF…QVWI), 126–146 (GVLM…YWLH), 177–197 (PFAE…TTLL), 200–220 (TASI…NNMG), and 329–349 (LLWP…RLFV). Residues 138 to 272 (VEFLYYWLHK…MPLYDYIYGT (135 aa)) enclose the Fatty acid hydroxylase domain.

It belongs to the sterol desaturase family. As to quaternary structure, homodimer. Interacts with CER3, CYTB5-B, CYTB5-C, CYTB5-D and CYTB5-E. Expressed in seedlings, stems, leaves, flowers, fruits and siliques. Not detected in roots, pollen and seeds. Expressed in trichomes, cotyledons, shoot apical meristem and leaf primordia. Preferentially associated with young leaves rather than mature leaves. Expressed in the epidermis of the stem and caulines leaves, in the carpels and the sepals.

Its subcellular location is the endoplasmic reticulum membrane. It carries out the reaction a long-chain fatty aldehyde + 2 NADPH + O2 + H(+) = a long-chain alkane + formate + 2 NADP(+) + H2O. In terms of biological role, aldehyde decarbonylase involved in the conversion of aldehydes to alkanes. Core component of a very-long-chain alkane synthesis complex. Involved in epicuticular wax biosynthesis and pollen fertility. The chain is Very-long-chain aldehyde decarbonylase CER1 (CER1) from Arabidopsis thaliana (Mouse-ear cress).